Consider the following 212-residue polypeptide: Large ribosomal subunit protein mL48 (212 aa).

The N-terminal 28 residues, Met-1–Thr-28, are a transit peptide targeting the mitochondrion. The residue at position 199 (Lys-199) is an N6-succinyllysine.

Belongs to the mitochondrion-specific ribosomal protein mL48 family. Component of the mitochondrial ribosome large subunit (39S) which comprises a 16S rRNA and about 50 distinct proteins. Interacts with OXA1L.

It is found in the mitochondrion. This chain is Large ribosomal subunit protein mL48 (MRPL48), found in Bos taurus (Bovine).